The primary structure comprises 124 residues: Galanin peptides (124 aa).

The signal sequence occupies residues 1–19; the sequence is MARGSVILLAWLLLVATLS. Residues 20-30 constitute a propeptide that is removed on maturation; sequence ATLGLGMPTKE. Thr-61 is modified (threonine amide). Ser-117 and Ser-118 each carry phosphoserine.

It belongs to the galanin family.

It is found in the secreted. In terms of biological role, endocrine hormone of the central and peripheral nervous systems that binds and activates the G protein-coupled receptors GALR1, GALR2, and GALR3. This small neuropeptide may regulate diverse physiologic functions including contraction of smooth muscle of the gastrointestinal and genitourinary tract, growth hormone and insulin release and adrenal secretion. The sequence is that of Galanin peptides (Gal) from Rattus norvegicus (Rat).